Consider the following 38-residue polypeptide: Large ribosomal subunit protein bL36 (38 aa).

It belongs to the bacterial ribosomal protein bL36 family.

The sequence is that of Large ribosomal subunit protein bL36 from Lactobacillus johnsonii (strain CNCM I-12250 / La1 / NCC 533).